The chain runs to 203 residues: Molybdenum cofactor guanylyltransferase (203 aa).

Residues 12–14 (LAG), K25, N53, D71, and D101 contribute to the GTP site. D101 contacts Mg(2+).

It belongs to the MobA family. In terms of assembly, monomer. Requires Mg(2+) as cofactor.

Its subcellular location is the cytoplasm. The catalysed reaction is Mo-molybdopterin + GTP + H(+) = Mo-molybdopterin guanine dinucleotide + diphosphate. Transfers a GMP moiety from GTP to Mo-molybdopterin (Mo-MPT) cofactor (Moco or molybdenum cofactor) to form Mo-molybdopterin guanine dinucleotide (Mo-MGD) cofactor. The sequence is that of Molybdenum cofactor guanylyltransferase from Cupriavidus metallidurans (strain ATCC 43123 / DSM 2839 / NBRC 102507 / CH34) (Ralstonia metallidurans).